The chain runs to 282 residues: Undecaprenyl-diphosphatase (282 aa).

7 helical membrane passes run 39 to 59, 85 to 105, 115 to 135, 153 to 173, 196 to 216, 230 to 250, and 260 to 280; these read PGAAFTAIVQMGTLAAVLIYF, ATMGWMIAAGTIPIVFFGLLF, SLYWISAALIGLALILWLTEV, IGWKEALLIGVAQSIALIPGS, FSFLLSLPSVLAAALLQLYET, LLVATIAAGVVGYASIAFLIT, and FIIYRIVIGVAILGLIATGAI.

This sequence belongs to the UppP family.

It is found in the cell inner membrane. The enzyme catalyses di-trans,octa-cis-undecaprenyl diphosphate + H2O = di-trans,octa-cis-undecaprenyl phosphate + phosphate + H(+). In terms of biological role, catalyzes the dephosphorylation of undecaprenyl diphosphate (UPP). Confers resistance to bacitracin. In Chlorobium chlorochromatii (strain CaD3), this protein is Undecaprenyl-diphosphatase.